A 249-amino-acid chain; its full sequence is tRNA (guanine-N(1)-)-methyltransferase (249 aa).

Residues glycine 113 and valine 133–leucine 138 each bind S-adenosyl-L-methionine.

This sequence belongs to the RNA methyltransferase TrmD family. Homodimer.

It localises to the cytoplasm. It catalyses the reaction guanosine(37) in tRNA + S-adenosyl-L-methionine = N(1)-methylguanosine(37) in tRNA + S-adenosyl-L-homocysteine + H(+). Specifically methylates guanosine-37 in various tRNAs. In Tolumonas auensis (strain DSM 9187 / NBRC 110442 / TA 4), this protein is tRNA (guanine-N(1)-)-methyltransferase.